A 359-amino-acid polypeptide reads, in one-letter code: Peptide chain release factor 1 (359 aa).

Residue Gln-235 is modified to N5-methylglutamine.

Belongs to the prokaryotic/mitochondrial release factor family. In terms of processing, methylated by PrmC. Methylation increases the termination efficiency of RF1.

The protein resides in the cytoplasm. In terms of biological role, peptide chain release factor 1 directs the termination of translation in response to the peptide chain termination codons UAG and UAA. The polypeptide is Peptide chain release factor 1 (Anaplasma marginale (strain Florida)).